The chain runs to 560 residues: uncharacterized protein (560 aa).

Residues 1–17 (MEPKRKSGSLAKHDLPQ) are Cytoplasmic-facing. Residues 18 to 38 (FYLLIMLYLAQGIPVGLAFGT) traverse the membrane as a helical segment. Residues 39–54 (VPFLLKSLAKETSFTS) lie on the Extracellular side of the membrane. A helical membrane pass occupies residues 55–75 (LGIFSMATYPYSLKIIWSPIV). Residues 76–88 (DSLYNKRIGRRRS) are Cytoplasmic-facing. Residues 89-109 (WIIPVQFVSGFVLWALGWCIS) traverse the membrane as a helical segment. At 110–139 (QGIIFDGVDDAFHNRGNGTLHSVSIKNLTW) the chain is on the extracellular side. A helical transmembrane segment spans residues 140-160 (WFGLLVFLCATQDIAVDGWAL). Topologically, residues 161-172 (TILSKESLSYAS) are cytoplasmic. The chain crosses the membrane as a helical span at residues 173–193 (TAQTIGLNIGYFMSFTIFLSL). The Extracellular segment spans residues 194-214 (NSSDFANKYFRNIPLDHGFIS). The helical transmembrane segment at 215-235 (LGGYMKFSGMLYIVITIYIIF) threads the bilayer. At 236–329 (CTKEKPYVEY…KLLEQGFKRE (94 aa)) the chain is on the cytoplasmic side. The chain crosses the membrane as a helical span at residues 330–350 (DLAVTVLIDLPFEIIFGYYVV). The Extracellular segment spans residues 351 to 374 (KWSSDKDPMIRDNRRLRNSTGTNK). The helical transmembrane segment at 375-395 (VIKFLVGDAGVLTPWLWGFLG) threads the bilayer. The Cytoplasmic portion of the chain corresponds to 396–421 (RLAAAVLGSYVVKQFPKDGEISTGYF). A helical membrane pass occupies residues 422–442 (CLVIFQHLLGSFMNTVQFIGI). Topologically, residues 443 to 521 (SAFHTRVADP…LNGTVTILRD (79 aa)) are extracellular. The chain crosses the membrane as a helical span at residues 522–542 (GYYITNLICIVVGLFLYFGYL). Over 543–560 (KRKILHLQSLPISSWRCT) the chain is Cytoplasmic.

It is found in the membrane. This is an uncharacterized protein from Saccharomyces cerevisiae (strain ATCC 204508 / S288c) (Baker's yeast).